The following is a 331-amino-acid chain: MDCRLLNEKSRIFVNADPYFVSDYVNQHVGSHCIRLPKSGCPEASLNHSTFGSLDLCRISYGGSVRVTSPGLETCYHLQVLLKGHCLWRGYGLEHYFSPGELLLINPDDRADLTYSEDCEKFIVKLPSVVLDRACSESYWHKPSEGIRFTTRHNLQQLDGFINLLGLVCDEAEHTNSMPRVQEYYTGIIATKLLEMLSSNVSRETFSEGCPSFERVVQFIEDNLKQSISLERLAELALMSPRSLYTLFEKHAGTTPKNYIRNRKLECIRARLSDPNANVRSVTEMALDYGFFHTGRFAENYRSTFGELPSDTLRRRKMKWLDPEESLPPLP.

The region spanning 214-315 (ERVVQFIEDN…GELPSDTLRR (102 aa)) is the HTH araC/xylS-type domain. 2 consecutive DNA-binding regions (H-T-H motif) follow at residues 231 to 252 (ERLAELALMSPRSLYTLFEKHA) and 282 to 305 (VTEMALDYGFFHTGRFAENYRSTF).

The protein resides in the cytoplasm. Functionally, regulatory protein of the TOL plasmid xyl operons. XylS activates the xylXYZLTEGFJQKIH operon required for the degradation of toluene, m-xylene and p-xylene. This chain is XylDLEGF operon transcriptional activator 3 (xylS3), found in Pseudomonas putida (Arthrobacter siderocapsulatus).